Here is a 459-residue protein sequence, read N- to C-terminus: Protein ABHD15 (459 aa).

Positions 1–28 (MPPWAAALALLLAALALLLLRPWKRAVG) are cleaved as a signal peptide. Active-site charge relay system residues include Asp-351 and His-382. Phosphoserine is present on Ser-425.

Belongs to the AB hydrolase superfamily. AB hydrolase 4 family. As to quaternary structure, interacts with PDE3B; this interaction regulates PDE3B's stability and expression and, thereby, impacts the antilipolytic action of insulin. Mainly expressed in adipocytes and adipose depots, followed by a weak expression in liver and pancreas. In white adipose tissue (WAT), only expressed in mature adipocytes and primary adipocytes differentiated from stromal vascular cells (SVCs), but not in undifferentiated SVCs.

It localises to the secreted. In terms of biological role, may regulate adipocyte lipolysis and liver lipid accumulation. This chain is Protein ABHD15, found in Mus musculus (Mouse).